The following is a 697-amino-acid chain: Polyribonucleotide nucleotidyltransferase (697 aa).

Residues Asp-489 and Asp-495 each coordinate Mg(2+). In terms of domain architecture, KH spans 556–615 (PRIETIKIKPDKIREVIGSGGKVIRGITEATGVKIEIQDDGTINIASADPEATKKAIAMI). The S1 motif domain maps to 625–693 (GKTYKGRIVK…RSGRVKLSRK (69 aa)).

Belongs to the polyribonucleotide nucleotidyltransferase family. Mg(2+) serves as cofactor.

Its subcellular location is the cytoplasm. It carries out the reaction RNA(n+1) + phosphate = RNA(n) + a ribonucleoside 5'-diphosphate. Functionally, involved in mRNA degradation. Catalyzes the phosphorolysis of single-stranded polyribonucleotides processively in the 3'- to 5'-direction. This chain is Polyribonucleotide nucleotidyltransferase, found in Bdellovibrio bacteriovorus (strain ATCC 15356 / DSM 50701 / NCIMB 9529 / HD100).